We begin with the raw amino-acid sequence, 403 residues long: F-box/kelch-repeat protein At5g43190 (403 aa).

The region spanning 45–91 (PNIWSNLPNHLLEHILSLLPFKTLLTLRSISRHLRSLILSPSFISDH) is the F-box domain. Kelch repeat units lie at residues 91–140 (HSFS…LLSS), 192–240 (KIFT…VFYN), 291–339 (ILYM…VCYH), and 343–393 (HVYC…FRWF).

The protein is F-box/kelch-repeat protein At5g43190 of Arabidopsis thaliana (Mouse-ear cress).